We begin with the raw amino-acid sequence, 151 residues long: MLSEQQYRYIVRILGTDIPGDLKVPYGLALVKGIGVNLAYALCRLLGIDPNKRIGFLTDAEIEKIEKAMANPLAIGIPVWMLNRRKDYETGKDLHLVGADLIYYVKRDIEREKRIRSWRGIRHALGLKVRGQRTATTGRIGMTIGVRKGKK.

This sequence belongs to the universal ribosomal protein uS13 family. In terms of assembly, part of the 30S ribosomal subunit. Forms a loose heterodimer with protein S19. Forms two bridges to the 50S subunit in the 70S ribosome.

Its function is as follows. Located at the top of the head of the 30S subunit, it contacts several helices of the 16S rRNA. In the 70S ribosome it contacts the 23S rRNA (bridge B1a) and protein L5 of the 50S subunit (bridge B1b), connecting the 2 subunits; these bridges are implicated in subunit movement. The protein is Small ribosomal subunit protein uS13 of Hyperthermus butylicus (strain DSM 5456 / JCM 9403 / PLM1-5).